The primary structure comprises 179 residues: Translation initiation factor IF-3 (179 aa).

It belongs to the IF-3 family. In terms of assembly, monomer.

Its subcellular location is the cytoplasm. IF-3 binds to the 30S ribosomal subunit and shifts the equilibrium between 70S ribosomes and their 50S and 30S subunits in favor of the free subunits, thus enhancing the availability of 30S subunits on which protein synthesis initiation begins. This is Translation initiation factor IF-3 from Buchnera aphidicola subsp. Schizaphis graminum (strain Sg).